We begin with the raw amino-acid sequence, 167 residues long: uncharacterized protein (167 aa).

This is an uncharacterized protein from Acanthamoeba polyphaga (Amoeba).